A 562-amino-acid chain; its full sequence is Arylsulfatase H (562 aa).

Residues aspartate 15, aspartate 16, and cysteine 55 each contribute to the Ca(2+) site. Residue cysteine 55 is the Nucleophile of the active site. The residue at position 55 (cysteine 55) is a 3-oxoalanine (Cys). Lysine 115 contributes to the substrate binding site. The active site involves histidine 117. A run of 2 helical transmembrane segments spans residues 167 to 187 and 189 to 209; these read LWIS…PKFA and WFSV…LFFT. Position 271 (histidine 271) interacts with substrate. Ca(2+) is bound by residues aspartate 323 and asparagine 324. Lysine 348 provides a ligand contact to substrate.

This sequence belongs to the sulfatase family. It depends on Ca(2+) as a cofactor. Post-translationally, the conversion to 3-oxoalanine (also known as C-formylglycine, FGly), of a serine or cysteine residue in prokaryotes and of a cysteine residue in eukaryotes, is critical for catalytic activity.

Its subcellular location is the membrane. The protein is Arylsulfatase H (ARSH) of Homo sapiens (Human).